The chain runs to 210 residues: Cyclin-U1-1 (210 aa).

It belongs to the cyclin family. Cyclin U/P subfamily. As to quaternary structure, interacts with CDKA-1. As to expression, expressed in roots and flowers. Expressed in the shoot apex, leaf primordia and young leaves.

This Arabidopsis thaliana (Mouse-ear cress) protein is Cyclin-U1-1 (CYCU1-1).